The following is a 211-amino-acid chain: Redox-sensing transcriptional repressor Rex (211 aa).

The segment at residues 13–52 is a DNA-binding region (H-T-H motif); the sequence is TYLRILEELEAQGVHRTSSEQLGELAQVTAFQVRKDLSYF. 87-92 contacts NAD(+); sequence GMGRLG.

The protein belongs to the transcriptional regulatory Rex family. As to quaternary structure, homodimer.

Its subcellular location is the cytoplasm. Modulates transcription in response to changes in cellular NADH/NAD(+) redox state. In Thermus aquaticus, this protein is Redox-sensing transcriptional repressor Rex.